We begin with the raw amino-acid sequence, 191 residues long: Corrinoid adenosyltransferase (191 aa).

ATP is bound by residues 10-18, lysine 28, 140-145, and asparagine 166; these read TRTGDNGTT and RRAERS.

Belongs to the Cob(I)alamin adenosyltransferase family.

Its subcellular location is the cytoplasm. The catalysed reaction is 2 cob(II)yrinate a,c diamide + reduced [electron-transfer flavoprotein] + 2 ATP = 2 adenosylcob(III)yrinate a,c-diamide + 2 triphosphate + oxidized [electron-transfer flavoprotein] + 3 H(+). It carries out the reaction 2 cob(II)alamin + reduced [electron-transfer flavoprotein] + 2 ATP = 2 adenosylcob(III)alamin + 2 triphosphate + oxidized [electron-transfer flavoprotein] + 3 H(+). The protein operates within cofactor biosynthesis; adenosylcobalamin biosynthesis; adenosylcobalamin from cob(II)yrinate a,c-diamide: step 2/7. This Mycobacterium leprae (strain TN) protein is Corrinoid adenosyltransferase.